The primary structure comprises 741 residues: Ethylene receptor 2 (741 aa).

3 consecutive transmembrane segments (helical) span residues 23–43 (ISDF…IYFV), 53–73 (WVLV…LINL), and 92–112 (IMTA…IPDL). Cu cation-binding residues include C65 and H69. A GAF domain is found at 158-307 (DRHTILKTTL…VVADQVAVAL (150 aa)). The Histidine kinase domain maps to 350 to 589 (VMNHEMRTPM…TFVVKLGIPE (240 aa)). H353 is subject to Phosphohistidine; by autocatalysis. Residues 615–732 (KVLLLDDNGV…KMRNVLSNLL (118 aa)) enclose the Response regulatory domain. At D663 the chain carries 4-aspartylphosphate.

It belongs to the ethylene receptor family. In terms of assembly, homodimer; disulfide-linked. Cu cation is required as a cofactor. Activation probably requires a transfer of a phosphate group between a His in the transmitter domain and an Asp of the receiver domain.

It localises to the endoplasmic reticulum membrane. The catalysed reaction is ATP + protein L-histidine = ADP + protein N-phospho-L-histidine.. May act early in the ethylene signal transduction pathway, possibly as an ethylene receptor, or as a regulator of the pathway. The chain is Ethylene receptor 2 (ETR2) from Pelargonium hortorum (Common geranium).